The chain runs to 89 residues: UPF0335 protein Nham_1221 (89 aa).

Belongs to the UPF0335 family.

The polypeptide is UPF0335 protein Nham_1221 (Nitrobacter hamburgensis (strain DSM 10229 / NCIMB 13809 / X14)).